Here is a 347-residue protein sequence, read N- to C-terminus: Holliday junction branch migration complex subunit RuvB (347 aa).

The tract at residues 1–183 is large ATPase domain (RuvB-L); sequence MSDERVVTPR…FGSVHRLEFY (183 aa). Residues Leu22, Arg23, Gly64, Lys67, Thr68, Ser69, 130–132, Arg173, Tyr183, and Arg220 each bind ATP; that span reads EDF. Thr68 lines the Mg(2+) pocket. Residues 184–254 are small ATPAse domain (RuvB-S); it reads SVDALYEIVM…VARDALAKLE (71 aa). The interval 257-347 is head domain (RuvB-H); the sequence is HLGLDENDRR…NGAEQGRLWT (91 aa). Residues Arg312 and Arg317 each contribute to the DNA site.

It belongs to the RuvB family. Homohexamer. Forms an RuvA(8)-RuvB(12)-Holliday junction (HJ) complex. HJ DNA is sandwiched between 2 RuvA tetramers; dsDNA enters through RuvA and exits via RuvB. An RuvB hexamer assembles on each DNA strand where it exits the tetramer. Each RuvB hexamer is contacted by two RuvA subunits (via domain III) on 2 adjacent RuvB subunits; this complex drives branch migration. In the full resolvosome a probable DNA-RuvA(4)-RuvB(12)-RuvC(2) complex forms which resolves the HJ.

It localises to the cytoplasm. The catalysed reaction is ATP + H2O = ADP + phosphate + H(+). Functionally, the RuvA-RuvB-RuvC complex processes Holliday junction (HJ) DNA during genetic recombination and DNA repair, while the RuvA-RuvB complex plays an important role in the rescue of blocked DNA replication forks via replication fork reversal (RFR). RuvA specifically binds to HJ cruciform DNA, conferring on it an open structure. The RuvB hexamer acts as an ATP-dependent pump, pulling dsDNA into and through the RuvAB complex. RuvB forms 2 homohexamers on either side of HJ DNA bound by 1 or 2 RuvA tetramers; 4 subunits per hexamer contact DNA at a time. Coordinated motions by a converter formed by DNA-disengaged RuvB subunits stimulates ATP hydrolysis and nucleotide exchange. Immobilization of the converter enables RuvB to convert the ATP-contained energy into a lever motion, pulling 2 nucleotides of DNA out of the RuvA tetramer per ATP hydrolyzed, thus driving DNA branch migration. The RuvB motors rotate together with the DNA substrate, which together with the progressing nucleotide cycle form the mechanistic basis for DNA recombination by continuous HJ branch migration. Branch migration allows RuvC to scan DNA until it finds its consensus sequence, where it cleaves and resolves cruciform DNA. This is Holliday junction branch migration complex subunit RuvB from Roseiflexus castenholzii (strain DSM 13941 / HLO8).